The chain runs to 43 residues: Cytochrome b559 subunit beta (43 aa).

Residues 18-34 (WLSVHALGIPTIFFLGA) traverse the membrane as a helical segment. His-22 contacts heme.

Belongs to the PsbE/PsbF family. As to quaternary structure, heterodimer of an alpha subunit and a beta subunit. PSII is composed of 1 copy each of membrane proteins PsbA, PsbB, PsbC, PsbD, PsbE, PsbF, PsbH, PsbI, PsbJ, PsbK, PsbL, PsbM, PsbT, PsbX, PsbY, PsbZ, Psb30/Ycf12, at least 3 peripheral proteins of the oxygen-evolving complex and a large number of cofactors. It forms dimeric complexes. It depends on heme b as a cofactor.

Its subcellular location is the plastid. The protein localises to the chloroplast thylakoid membrane. Its function is as follows. This b-type cytochrome is tightly associated with the reaction center of photosystem II (PSII). PSII is a light-driven water:plastoquinone oxidoreductase that uses light energy to abstract electrons from H(2)O, generating O(2) and a proton gradient subsequently used for ATP formation. It consists of a core antenna complex that captures photons, and an electron transfer chain that converts photonic excitation into a charge separation. This chain is Cytochrome b559 subunit beta, found in Stigeoclonium helveticum (Green alga).